The following is a 354-amino-acid chain: Uptake hydrogenase small subunit (354 aa).

A signal peptide (tat-type signal) is located at residues 1-44; that stretch reads MSQLETXYDVMRRQGITRRSFLKYCSLTGRPCLGPTFAPQIAHA. [4Fe-4S] cluster is bound by residues C61, C64, C156, C190, H228, S231, C256, and C262. Positions 271, 290, and 293 each coordinate [3Fe-4S] cluster.

The protein belongs to the [NiFe]/[NiFeSe] hydrogenase small subunit family. Heterodimer of a large and a small subunit. Requires [4Fe-4S] cluster as cofactor. [3Fe-4S] cluster serves as cofactor. Predicted to be exported by the Tat system. The position of the signal peptide cleavage has not been experimentally proven.

The protein resides in the cell membrane. It catalyses the reaction H2 + A = AH2. Its function is as follows. This enzyme recycles the H(2) produced by nitrogenase to increase the production of ATP and to protect nitrogenase against inhibition or damage by O(2) under carbon- or phosphate-limited conditions. This Azotobacter chroococcum mcd 1 protein is Uptake hydrogenase small subunit (hupA).